The chain runs to 215 residues: MTSSMYNYIEQTWQSDEWKKVLRQRLIEWRKSPAVERIDKPTRLNRARAIGYKAKQGFVVVRVRVRRGGLNKPRPNSGRRPKRMGVYGYSPAKGYRWIAEEKAARKFPNLEVLGSYYVGEDGMYKYYEIIMVDPNHPVIKSDPNLKWLQDPANRKRVFRGLTSAGKKARGLLKSRGLKGTVKHKWKKKEKEREQKKRHEATKYYRLQNYDKLPGK.

The interval 179-215 (GTVKHKWKKKEKEREQKKRHEATKYYRLQNYDKLPGK) is disordered. The span at 188–202 (KEKEREQKKRHEATK) shows a compositional bias: basic and acidic residues.

The protein belongs to the eukaryotic ribosomal protein eL15 family.

The protein is Large ribosomal subunit protein eL15 of Sulfurisphaera tokodaii (strain DSM 16993 / JCM 10545 / NBRC 100140 / 7) (Sulfolobus tokodaii).